Here is a 684-residue protein sequence, read N- to C-terminus: Poly(A) RNA polymerase cid14 (684 aa).

Disordered regions lie at residues 1–52, 64–127, and 161–219; these read MGKK…DAYD, DQEE…KRGE, and WNSD…QAYE. 5 stretches are compositionally biased toward basic and acidic residues: residues 19–35, 73–91, 108–127, 171–186, and 199–210; these read ERTE…DKPS, GSKK…DKGG, DPLE…KRGE, SNDK…KSSK, and FFHEANEKSDSN. Asp-298 and Asp-300 together coordinate Mg(2+). ATP is bound by residues Gly-364, Lys-389, Ser-407, Tyr-408, Asn-492, and Lys-496. In terms of domain architecture, PAP-associated spans 434–492; it reads NFGVLLLEFLELYGKQFYYDAVGIAVHNGGFYFSKKKMGWLKPNQPYLLSIQDPVDFQN. Residues 623-684 are disordered; that stretch reads GHENFQKQAL…SRAKKIRKRF (62 aa). Positions 628-655 are enriched in polar residues; the sequence is QKQALTSTGEQSSSNSRANPSKLFNISS. Positions 656–672 are enriched in acidic residues; sequence DDSEDEVPIIEDTTASD.

It belongs to the DNA polymerase type-B-like family. Heterooligomer. Component of the TRAMP complex composed of at least cid14, mtr4, and air1. Mg(2+) serves as cofactor. It depends on Mn(2+) as a cofactor.

It localises to the nucleus. Its subcellular location is the nucleolus. The catalysed reaction is RNA(n) + ATP = RNA(n)-3'-adenine ribonucleotide + diphosphate. Functionally, required for 3' polyadenylation of the 5.8S and 25S rRNAs as a prelude to their degradation in the exosome. Involved in the nucleolar organization to ensure faithful chromosome segregation during mitosis. In Schizosaccharomyces pombe (strain 972 / ATCC 24843) (Fission yeast), this protein is Poly(A) RNA polymerase cid14 (cid14).